Reading from the N-terminus, the 20-residue chain is Alanine aminotransferase 1 (20 aa).

N6-(pyridoxal phosphate)lysine is present on K11. K11 carries an N-linked (Glc) (glycation) lysine; in vitro glycan.

This sequence belongs to the class-I pyridoxal-phosphate-dependent aminotransferase family. Alanine aminotransferase subfamily. In terms of assembly, homodimer. It depends on pyridoxal 5'-phosphate as a cofactor. Post-translationally, glycation of Lys-11 inactivates the enzyme.

Its subcellular location is the cytoplasm. It carries out the reaction L-alanine + 2-oxoglutarate = pyruvate + L-glutamate. It functions in the pathway amino-acid degradation; L-alanine degradation via transaminase pathway; pyruvate from L-alanine: step 1/1. Functionally, catalyzes the reversible transamination between alanine and 2-oxoglutarate to form pyruvate and glutamate. Participates in cellular nitrogen metabolism and also in liver gluconeogenesis starting with precursors transported from skeletal muscles. The sequence is that of Alanine aminotransferase 1 (GPT) from Sus scrofa (Pig).